We begin with the raw amino-acid sequence, 363 residues long: Aminomethyltransferase (363 aa).

Belongs to the GcvT family. As to quaternary structure, the glycine cleavage system is composed of four proteins: P, T, L and H.

It catalyses the reaction N(6)-[(R)-S(8)-aminomethyldihydrolipoyl]-L-lysyl-[protein] + (6S)-5,6,7,8-tetrahydrofolate = N(6)-[(R)-dihydrolipoyl]-L-lysyl-[protein] + (6R)-5,10-methylene-5,6,7,8-tetrahydrofolate + NH4(+). Functionally, the glycine cleavage system catalyzes the degradation of glycine. The protein is Aminomethyltransferase of Staphylococcus aureus (strain bovine RF122 / ET3-1).